A 500-amino-acid chain; its full sequence is Beta-glucosidase 2 (500 aa).

The first 24 residues, 1–24 (MGAAAAAGFFFVLLFLSVQGGAVG), serve as a signal peptide directing secretion. Residues glutamine 44 and histidine 144 each coordinate a beta-D-glucoside. The Proton donor role is filled by glutamate 190. A disulfide bridge links cysteine 209 with cysteine 218. Asparagine 222 carries N-linked (GlcNAc...) asparagine glycosylation. A beta-D-glucoside contacts are provided by tyrosine 334 and glutamate 403. Glutamate 403 acts as the Nucleophile in catalysis. Asparagine 410 is a glycosylation site (N-linked (GlcNAc...) asparagine). Tryptophan 445 contributes to the a beta-D-glucoside binding site.

This sequence belongs to the glycosyl hydrolase 1 family.

It carries out the reaction Hydrolysis of terminal, non-reducing beta-D-glucosyl residues with release of beta-D-glucose.. In Oryza sativa subsp. japonica (Rice), this protein is Beta-glucosidase 2 (BGLU2).